The sequence spans 1384 residues: Protein Gawky (1384 aa).

Disordered stretches follow at residues 1-99 (MREA…VWTG), 148-227 (NGSS…DPRG), 263-335 (TAST…DDGT), and 447-501 (VGAP…SGWS). The required for interaction with AGO1 stretch occupies residues 1 to 205 (MREALFSQDG…HRGGNGSGAT (205 aa)). Sufficient for miRNA-mediated silencing regions lie at residues 1–605 (MREA…SLGS) and 605–830 (SYAD…SVHL). Residues 15–24 (HVNQDTNWEV) show a composition bias toward polar residues. The segment covering 150-171 (SSNITGSSGVATGSSGNSSNAG) has biased composition (low complexity). Residues 205 to 490 (TSSDPRDIRM…GVSWGNKQSK (286 aa)) form a minimal N-terminal region required for miRNA-mediated silencing region. Positions 208-225 (DPRDIRMIDPRDPIRGDP) are enriched in basic and acidic residues. Polar residues-rich tracts occupy residues 449–475 (APSSGSVSSNNWVDDKSNSTLAQNSWS) and 485–501 (GNKQSKPPSNSASSGWS). A UBA domain is found at 547–588 (IIKQSKQYRILVENGFKKEDVERALVIANMNIEEAADMLRAN). Disordered stretches follow at residues 607–626 (ADHNSSTSSGGFAGRYPVNS), 809–841 (QNMQPTSQQQQPQQQQLPSVHLSNSGNDYLRGH), 889–942 (TEFS…NKDW), 962–1022 (EPGK…LSSS), 1052–1102 (TSPL…GVQT), 1188–1221 (SENEVQSIMQHLPQTPSSTSSSGTSGGNVGGVGT), and 1318–1368 (GTAN…PSGR). Residues 809–826 (QNMQPTSQQQQPQQQQLP) are compositionally biased toward low complexity. The interval 862 to 1115 (YQGASNQQSR…NWTGGNTTWG (254 aa)) is not required for interaction with AGO1 or miRNAs or for localization to P-bodies but necessary for miRNA-mediated silencing and for interaction with pAbp. The span at 898–924 (TKQNLTANTSNINSLGLQNDSTWSTGR) shows a compositional bias: polar residues. The tract at residues 940–1215 (KDWSVAQPTS…TSSSGTSGGN (276 aa)) is sufficient for miRNA-mediated silencing. Low complexity predominate over residues 1010–1022 (SPTDLPPLSLSSS). A compositionally biased stretch (polar residues) spans 1052-1061 (TSPLNKSSSR). Positions 1068–1084 (TANSNKSANSNASTPTT) are enriched in low complexity. Residues 1117–1189 (SWLLLKNLTA…TTIFAESPSE (73 aa)) form the RRM domain. Residues 1188-1203 (SENEVQSIMQHLPQTP) are compositionally biased toward polar residues. The not required for interaction with AGO1 or miRNAs or for localization to P-bodies but necessary for miRNA-mediated silencing, dissociation from AGO1 and miRNAs and interaction with pAbp stretch occupies residues 1200 to 1384 (PQTPSSTSSS…ISLVYSIVDD (185 aa)). Positions 1211–1220 (TSGGNVGGVG) are enriched in gly residues. A compositionally biased stretch (low complexity) spans 1318–1349 (GTANSSGSKSSANNLASGQSSASNLTNSTNST). A compositionally biased stretch (polar residues) spans 1350–1365 (WRQTSQNQALQSQSRP).

Belongs to the GW182 family. In terms of assembly, component of the miRNA-directed RNA-induced silencing complex (miRISC), composed of at least AGO1 and gw, which bind mature miRNAs and targets the selective destruction of homologous RNAs. Interacts (via N-terminal region) with AGO1 (via Piwi domain); the interaction is essential for localization of AGO1 in P-bodies and for miRNA-mediated silencing. Interacts with pAbp/PABPC1; this interaction interferes with the binding of pAbp to eIF4G and is required for miRNA-mediated silencing. Interacts with CCR4-NOT complex members Not1, Rga/NOT2, twin/CCR4, Pop2 and NOT3/5 and with PAN complex members CG8232/PAN2 and CG11486/PAN3.

The protein localises to the cytoplasm. The protein resides in the P-body. Its function is as follows. Required for gene silencing mediated by micro-RNAs (miRNAs). Silences both polyadenylated and deadenylated mRNAs. Required for miRNA-mediated translational repression and mRNA decay. Not required for miRNA target recognition. Necessary to initiate but not to maintain silencing. Promotes mRNA deadenylation through the recruitment of the CCR4-NOT and PAN complexes and promotes decapping by the DCP1-DCP2 complex. Dissociates from silenced mRNAs after deadenylation. Required for completion of nuclear divisions during early embryonic development. The protein is Protein Gawky of Drosophila melanogaster (Fruit fly).